Reading from the N-terminus, the 1176-residue chain is Nitrite reductase [NAD(P)H] (1176 aa).

Residues 1 to 23 (MANTSLDMASSTSPSPSPESTTT) form a disordered region. Residues 10–23 (SSTSPSPSPESTTT) are compositionally biased toward low complexity. 26-60 (KRIVVVGLGMVGIAFIEKLIKLDTQRQYEIVVIGE) serves as a coordination point for FAD. 183–215 (STGVVVGGGLLGLEAAKALMDLQVFGRVVVIER) is a binding site for NAD(+). C496, C498, C531, and C534 together coordinate [2Fe-2S] cluster. [4Fe-4S] cluster contacts are provided by C717, C723, C757, and C761. A siroheme-binding site is contributed by C761. The Rieske; atypical domain maps to 942-1094 (SYFQGADDLP…VEERDDGMVY (153 aa)). Residues C981 and H983 each contribute to the [2Fe-2S] cluster site. Composition is skewed to low complexity over residues 998-1008 (PSPSSCSSSAL) and 1030-1049 (PTSS…TNPS). Positions 998–1051 (PSPSSCSSSALPPSPPSTPPRSSSPVTSPPQSPTSSATPATTASSSCTTNPSGP) are disordered. The [2Fe-2S] cluster site is built by C1058 and H1061. Over residues 1124–1139 (LRELDELNKSKGVEGK) the composition is skewed to basic and acidic residues. A disordered region spans residues 1124-1157 (LRELDELNKSKGVEGKKGRRGRKPGASEAGKEVG).

Belongs to the nitrite and sulfite reductase 4Fe-4S domain family. Homodimer. Siroheme is required as a cofactor. Requires [4Fe-4S] cluster as cofactor. It depends on FAD as a cofactor. The cofactor is [2Fe-2S] cluster.

It catalyses the reaction NH4(+) + 3 NADP(+) + 2 H2O = nitrite + 3 NADPH + 5 H(+). The catalysed reaction is NH4(+) + 3 NAD(+) + 2 H2O = nitrite + 3 NADH + 5 H(+). It participates in nitrogen metabolism; nitrate reduction (assimilation). The sequence is that of Nitrite reductase [NAD(P)H] (nit-6) from Neurospora crassa (strain ATCC 24698 / 74-OR23-1A / CBS 708.71 / DSM 1257 / FGSC 987).